The following is a 230-amino-acid chain: Ureidoacrylate amidohydrolase RutB (230 aa).

Residue Asp24 is the Proton acceptor of the active site. The active site involves Lys133. Cys166 functions as the Nucleophile in the catalytic mechanism.

The protein belongs to the isochorismatase family. RutB subfamily.

The enzyme catalyses (Z)-3-ureidoacrylate + H2O + H(+) = (Z)-3-aminoacrylate + NH4(+) + CO2. It catalyses the reaction (Z)-3-ureidoacrylate + H2O = (Z)-3-aminoacrylate + carbamate + H(+). It carries out the reaction (Z)-2-methylureidoacrylate + H2O + H(+) = (Z)-2-methylaminoacrylate + NH4(+) + CO2. In terms of biological role, hydrolyzes ureidoacrylate to form aminoacrylate and carbamate. The carbamate hydrolyzes spontaneously, thereby releasing one of the nitrogen atoms of the pyrimidine ring as ammonia and one of its carbon atoms as CO2. This Escherichia coli O127:H6 (strain E2348/69 / EPEC) protein is Ureidoacrylate amidohydrolase RutB.